The sequence spans 196 residues: 3-isopropylmalate dehydratase small subunit (196 aa).

This sequence belongs to the LeuD family. LeuD type 1 subfamily. In terms of assembly, heterodimer of LeuC and LeuD.

It carries out the reaction (2R,3S)-3-isopropylmalate = (2S)-2-isopropylmalate. Its pathway is amino-acid biosynthesis; L-leucine biosynthesis; L-leucine from 3-methyl-2-oxobutanoate: step 2/4. Catalyzes the isomerization between 2-isopropylmalate and 3-isopropylmalate, via the formation of 2-isopropylmaleate. This is 3-isopropylmalate dehydratase small subunit from Herpetosiphon aurantiacus (strain ATCC 23779 / DSM 785 / 114-95).